The following is a 199-amino-acid chain: Superoxide dismutase [Mn/Fe] 1 (199 aa).

4 residues coordinate Fe(3+): histidine 27, histidine 81, aspartate 161, and histidine 165. Positions 27, 81, 161, and 165 each coordinate Mn(2+).

This sequence belongs to the iron/manganese superoxide dismutase family. In terms of assembly, homodimer. Can also form a heterodimer with SodM. The cofactor is Mn(2+). Fe(3+) is required as a cofactor.

It carries out the reaction 2 superoxide + 2 H(+) = H2O2 + O2. Its function is as follows. Destroys superoxide anion radicals which are normally produced within the cells and which are toxic to biological systems. Catalyzes the dismutation of superoxide anion radicals into O2 and H2O2 by successive reduction and oxidation of the transition metal ion at the active site. This is Superoxide dismutase [Mn/Fe] 1 (sodA) from Staphylococcus aureus (strain USA300).